The sequence spans 512 residues: Mesoderm induction early response protein 1 (512 aa).

The span at 1-16 (MAEPSVESSSPGGSAT) shows a compositional bias: low complexity. Disordered regions lie at residues 1–63 (MAEP…REGD) and 75–173 (YGST…EDYI). The residue at position 10 (S10) is a Phosphoserine. The segment covering 17–36 (SDDHEFDPSADMLVHDFDDE) has biased composition (basic and acidic residues). 2 stretches are compositionally biased toward acidic residues: residues 37–46 (RTLEEEEMME) and 83–105 (EEDE…DNDD). Over residues 129-144 (QSSNDDPSQSVASQDA) the composition is skewed to polar residues. S141 bears the Phosphoserine mark. Position 155 is a phosphotyrosine (Y155). Phosphoserine is present on residues S160 and S166. A compositionally biased stretch (acidic residues) spans 160–173 (SEVEEESEEDEDYI). The ELM2 domain occupies 180-278 (KEIMVGSMFQ…EALRRLRFNV (99 aa)). The interaction with HDAC1 stretch occupies residues 180 to 284 (KEIMVGSMFQ…RFNVKAAREE (105 aa)). K239 participates in a covalent cross-link: Glycyl lysine isopeptide (Lys-Gly) (interchain with G-Cter in SUMO2). Positions 283–335 (EELSVWTEEECRNFEQGLKAYGKDFHLIQANKVRTRSVGECVAFYYMWKKSER) constitute an SANT domain. The disordered stretch occupies residues 366-512 (ESESAASSRA…KFEELENTDD (147 aa)). 3 positions are modified to phosphoserine: S367, S369, and S377. Residues 396–409 (TVSTTNQNGVSSNG) are compositionally biased toward polar residues. Positions 414-423 (LNKEEVKVEG) are enriched in basic and acidic residues. A Glycyl lysine isopeptide (Lys-Gly) (interchain with G-Cter in SUMO2) cross-link involves residue K420. T448 is subject to Phosphothreonine. Basic and acidic residues predominate over residues 462-475 (ARNENDFDEKSERP). Residues 482–494 (NSNGKESPGSSEF) are compositionally biased toward polar residues. A phosphoserine mark is found at S483, S488, and S491.

Interacts with HDAC1. Part of a complex containing at least CDYL, MIER1, MIER2, HDAC1 and HDAC2.

The protein resides in the nucleus. In terms of biological role, transcriptional repressor regulating the expression of a number of genes including SP1 target genes. Probably functions through recruitment of HDAC1 a histone deacetylase involved in chromatin silencing. This Pongo abelii (Sumatran orangutan) protein is Mesoderm induction early response protein 1 (MIER1).